Consider the following 322-residue polypeptide: Ribose-phosphate pyrophosphokinase 1 (322 aa).

ATP-binding positions include 39 to 41 (DGE) and 98 to 99 (RQ). The Mg(2+) site is built by histidine 132 and aspartate 173. Lysine 196 is an active-site residue. D-ribose 5-phosphate contacts are provided by residues arginine 198, aspartate 224, and 228–232 (DTAGT).

This sequence belongs to the ribose-phosphate pyrophosphokinase family. Class I subfamily. In terms of assembly, homohexamer. The cofactor is Mg(2+).

It is found in the cytoplasm. It carries out the reaction D-ribose 5-phosphate + ATP = 5-phospho-alpha-D-ribose 1-diphosphate + AMP + H(+). Its pathway is metabolic intermediate biosynthesis; 5-phospho-alpha-D-ribose 1-diphosphate biosynthesis; 5-phospho-alpha-D-ribose 1-diphosphate from D-ribose 5-phosphate (route I): step 1/1. Its function is as follows. Involved in the biosynthesis of the central metabolite phospho-alpha-D-ribosyl-1-pyrophosphate (PRPP) via the transfer of pyrophosphoryl group from ATP to 1-hydroxyl of ribose-5-phosphate (Rib-5-P). This chain is Ribose-phosphate pyrophosphokinase 1, found in Streptococcus mutans serotype c (strain ATCC 700610 / UA159).